We begin with the raw amino-acid sequence, 576 residues long: V-type ATP synthase alpha chain (576 aa).

Position 238–245 (238–245 (GPFGAGKT)) interacts with ATP.

The protein belongs to the ATPase alpha/beta chains family.

The enzyme catalyses ATP + H2O + 4 H(+)(in) = ADP + phosphate + 5 H(+)(out). Functionally, produces ATP from ADP in the presence of a proton gradient across the membrane. The V-type alpha chain is a catalytic subunit. The sequence is that of V-type ATP synthase alpha chain from Borrelia recurrentis (strain A1).